A 595-amino-acid chain; its full sequence is Probable inactive glycosyltransferase 25 family member 3 (595 aa).

The N-terminal stretch at 1-24 (MRAAPAAPLLQLLLLLGPRPEAAG) is a signal peptide. N-linked (GlcNAc...) asparagine glycosylation is found at N75, N153, N237, and N360. The disordered stretch occupies residues 576 to 595 (RLDLAGGSGHSLRPHPRDEL). Positions 592–595 (RDEL) match the Prevents secretion from ER motif.

This sequence belongs to the glycosyltransferase 25 family.

The protein localises to the endoplasmic reticulum lumen. Functionally, probable cell adhesion protein involved in leukocyte transmigration across the blood-brain barrier. Does not express any beta-galactosyltransferase activity in vitro. The polypeptide is Probable inactive glycosyltransferase 25 family member 3 (CERCAM) (Bos taurus (Bovine)).